A 362-amino-acid polypeptide reads, in one-letter code: 3-dehydroquinate synthase (362 aa).

Residues 71–76 (DGEQYK), 105–109 (GVVGD), 129–130 (TT), lysine 142, lysine 151, and 169–172 (CLKT) contribute to the NAD(+) site. Residues glutamate 184, histidine 247, and histidine 264 each coordinate Zn(2+).

This sequence belongs to the sugar phosphate cyclases superfamily. Dehydroquinate synthase family. Requires NAD(+) as cofactor. Co(2+) is required as a cofactor. Zn(2+) serves as cofactor.

The protein resides in the cytoplasm. It catalyses the reaction 7-phospho-2-dehydro-3-deoxy-D-arabino-heptonate = 3-dehydroquinate + phosphate. Its pathway is metabolic intermediate biosynthesis; chorismate biosynthesis; chorismate from D-erythrose 4-phosphate and phosphoenolpyruvate: step 2/7. In terms of biological role, catalyzes the conversion of 3-deoxy-D-arabino-heptulosonate 7-phosphate (DAHP) to dehydroquinate (DHQ). The protein is 3-dehydroquinate synthase of Escherichia coli O157:H7.